A 286-amino-acid chain; its full sequence is Elongation factor Ts (286 aa).

Residues 82-85 (TDFV) form an involved in Mg(2+) ion dislocation from EF-Tu region.

Belongs to the EF-Ts family.

It localises to the cytoplasm. In terms of biological role, associates with the EF-Tu.GDP complex and induces the exchange of GDP to GTP. It remains bound to the aminoacyl-tRNA.EF-Tu.GTP complex up to the GTP hydrolysis stage on the ribosome. The protein is Elongation factor Ts of Hamiltonella defensa subsp. Acyrthosiphon pisum (strain 5AT).